Here is a 130-residue protein sequence, read N- to C-terminus: Protein NrdI (130 aa).

It belongs to the NrdI family.

Its function is as follows. Probably involved in ribonucleotide reductase function. The chain is Protein NrdI from Bacillus velezensis (strain DSM 23117 / BGSC 10A6 / LMG 26770 / FZB42) (Bacillus amyloliquefaciens subsp. plantarum).